The chain runs to 246 residues: 3'(2'),5'-bisphosphate nucleotidase CysQ (246 aa).

5 residues coordinate Mg(2+): Glu64, Asp83, Leu85, Asp86, and Asp205. Residue Glu64 participates in substrate binding. Residues 85–88 (LDGT) and Asp205 contribute to the substrate site.

The protein belongs to the inositol monophosphatase superfamily. CysQ family. It depends on Mg(2+) as a cofactor.

It localises to the cell inner membrane. The enzyme catalyses adenosine 3',5'-bisphosphate + H2O = AMP + phosphate. Its function is as follows. Converts adenosine-3',5'-bisphosphate (PAP) to AMP. The chain is 3'(2'),5'-bisphosphate nucleotidase CysQ from Salmonella typhimurium (strain LT2 / SGSC1412 / ATCC 700720).